A 692-amino-acid chain; its full sequence is Elongation factor G (692 aa).

The region spanning 8–282 (EKTRNIGIMA…AVVEYMPAPT (275 aa)) is the tr-type G domain. GTP-binding positions include 17–24 (AHIDAGKT), 81–85 (DTPGH), and 135–138 (NKMD). Positions 285–304 (PNIKGVHPETGEADERHSSD) are disordered. Residues 290-304 (VHPETGEADERHSSD) show a composition bias toward basic and acidic residues.

The protein belongs to the TRAFAC class translation factor GTPase superfamily. Classic translation factor GTPase family. EF-G/EF-2 subfamily.

It is found in the cytoplasm. Its function is as follows. Catalyzes the GTP-dependent ribosomal translocation step during translation elongation. During this step, the ribosome changes from the pre-translocational (PRE) to the post-translocational (POST) state as the newly formed A-site-bound peptidyl-tRNA and P-site-bound deacylated tRNA move to the P and E sites, respectively. Catalyzes the coordinated movement of the two tRNA molecules, the mRNA and conformational changes in the ribosome. The polypeptide is Elongation factor G (Desulfitobacterium hafniense (strain Y51)).